Reading from the N-terminus, the 265-residue chain is Putative pyruvate, phosphate dikinase regulatory protein 2 (265 aa).

150–157 lines the ADP pocket; sequence GVSRTSKT.

The protein belongs to the pyruvate, phosphate/water dikinase regulatory protein family. PDRP subfamily.

It carries out the reaction N(tele)-phospho-L-histidyl/L-threonyl-[pyruvate, phosphate dikinase] + ADP = N(tele)-phospho-L-histidyl/O-phospho-L-threonyl-[pyruvate, phosphate dikinase] + AMP + H(+). The catalysed reaction is N(tele)-phospho-L-histidyl/O-phospho-L-threonyl-[pyruvate, phosphate dikinase] + phosphate + H(+) = N(tele)-phospho-L-histidyl/L-threonyl-[pyruvate, phosphate dikinase] + diphosphate. Its function is as follows. Bifunctional serine/threonine kinase and phosphorylase involved in the regulation of the pyruvate, phosphate dikinase (PPDK) by catalyzing its phosphorylation/dephosphorylation. This is Putative pyruvate, phosphate dikinase regulatory protein 2 from Latilactobacillus sakei subsp. sakei (strain 23K) (Lactobacillus sakei subsp. sakei).